A 283-amino-acid chain; its full sequence is MKVISSIQELRDQLRGQNRVAFVPTMGNLHEGHLSLMRLARQHGDPVVASIFVNRLQFGPNEDFDKYPRTLQADIEKLQKEGVYVLFAPTERDMYPEPQEYRVEPPHDLGDILEGEFRPGFFKGVCTVVMKLFSCVQPRVAVFGKKDYQQLMIVRRMANQFALPVDIIPAETVRAEDGLALSSRNAYLSNEERAEAPELYRTLGQVRQTMLETVLQGQASVEEVTAKALEHLRGRGWQPDYVAVRRRSDLQPPTPENIAAGEPLVVLTAAKLGKTRLIDNLEI.

26 to 33 contributes to the ATP binding site; the sequence is MGNLHEGH. The active-site Proton donor is the histidine 33. Glutamine 57 serves as a coordination point for (R)-pantoate. Glutamine 57 is a beta-alanine binding site. ATP is bound at residue 144-147; the sequence is GKKD. Glutamine 150 serves as a coordination point for (R)-pantoate. ATP is bound by residues valine 173 and 181 to 184; that span reads LSSR.

It belongs to the pantothenate synthetase family. As to quaternary structure, homodimer.

It is found in the cytoplasm. The catalysed reaction is (R)-pantoate + beta-alanine + ATP = (R)-pantothenate + AMP + diphosphate + H(+). It participates in cofactor biosynthesis; (R)-pantothenate biosynthesis; (R)-pantothenate from (R)-pantoate and beta-alanine: step 1/1. Its function is as follows. Catalyzes the condensation of pantoate with beta-alanine in an ATP-dependent reaction via a pantoyl-adenylate intermediate. The polypeptide is Pantothenate synthetase (Ralstonia nicotianae (strain ATCC BAA-1114 / GMI1000) (Ralstonia solanacearum)).